The following is a 308-amino-acid chain: Glutaminase (308 aa).

Substrate-binding residues include S66, N117, E161, N168, Y192, Y244, and V262.

It belongs to the glutaminase family. As to quaternary structure, homotetramer.

It carries out the reaction L-glutamine + H2O = L-glutamate + NH4(+). This chain is Glutaminase, found in Salmonella heidelberg (strain SL476).